A 163-amino-acid chain; its full sequence is Ribonuclease P protein component 4 (163 aa).

Residues Cys-66, Cys-69, Cys-96, and Cys-99 each coordinate Zn(2+). The tract at residues 110–163 is disordered; it reads GPRGGAPISPPAAEYGSGGRDSGEREDKGPQGPPRQGGRDNRQGGGHQGGPKGD. The span at 152–163 shows a compositional bias: gly residues; that stretch reads QGGGHQGGPKGD.

This sequence belongs to the eukaryotic/archaeal RNase P protein component 4 family. In terms of assembly, consists of a catalytic RNA component and at least 4-5 protein subunits. It depends on Zn(2+) as a cofactor.

It is found in the cytoplasm. It carries out the reaction Endonucleolytic cleavage of RNA, removing 5'-extranucleotides from tRNA precursor.. In terms of biological role, part of ribonuclease P, a protein complex that generates mature tRNA molecules by cleaving their 5'-ends. This Aeropyrum pernix (strain ATCC 700893 / DSM 11879 / JCM 9820 / NBRC 100138 / K1) protein is Ribonuclease P protein component 4.